A 407-amino-acid polypeptide reads, in one-letter code: E3 ubiquitin-protein ligase TRIM13 (407 aa).

An RING-type zinc finger spans residues 10-58 (CPICCSLFDDPRVLPCSHNFCKKCLEGLLEGNVRNSLWRPSPFKCPTCR). The segment at 89–131 (PKMPVCKGHLGQPLNIFCVTDMQLICGICATRGEHTKHVFSSI) adopts a B box-type zinc-finger fold. Zn(2+)-binding residues include Cys-94, His-97, Cys-117, and His-123. Residues 172-200 (LQLLTKDSDKVKEFFEKLQHTLDQKKNEI) adopt a coiled-coil conformation. Residues 316-336 (LLLMMVVLLGLLIFFGPTVFL) form a helical membrane-spanning segment.

Belongs to the TRIM/RBCC family. As to quaternary structure, interacts (via C-terminal domain) with VCP. Interacts with AKT1; the interaction ubiquitinates AKT1 and leads to its proteasomal degradation. Interacts with MDM2; the interaction ubiquitinates AKT1 and leads to its proteasomal degradation. Interacts with p62/SQSTM1. Interacts with TRAF6. Interacts with IKBKG/NEMO. In terms of processing, auto-ubiquitinated; requires the RING-type zinc finger. Auto-polyubiquitination leads to proteasomal degradation.

It is found in the endoplasmic reticulum membrane. It carries out the reaction S-ubiquitinyl-[E2 ubiquitin-conjugating enzyme]-L-cysteine + [acceptor protein]-L-lysine = [E2 ubiquitin-conjugating enzyme]-L-cysteine + N(6)-ubiquitinyl-[acceptor protein]-L-lysine.. Its pathway is protein modification; protein ubiquitination. Functionally, endoplasmic reticulum (ER) membrane anchored E3 ligase involved in the retrotranslocation and turnover of membrane and secretory proteins from the ER through a set of processes named ER-associated degradation (ERAD). This process acts on misfolded proteins as well as in the regulated degradation of correctly folded proteins. Enhances ionizing radiation-induced p53/TP53 stability and apoptosis via ubiquitinating MDM2 and AKT1 and decreasing AKT1 kinase activity through MDM2 and AKT1 proteasomal degradation. Regulates ER stress-induced autophagy, and may act as a tumor suppressor. Also plays a role in innate immune response by stimulating NF-kappa-B activity in the TLR2 signaling pathway. Ubiquitinates TRAF6 via the 'Lys-29'-linked polyubiquitination chain resulting in NF-kappa-B activation. Participates as well in T-cell receptor-mediated NF-kappa-B activation. In the presence of TNF, modulates the IKK complex by regulating IKBKG/NEMO ubiquitination leading to the repression of NF-kappa-B. The sequence is that of E3 ubiquitin-protein ligase TRIM13 (Trim13) from Mus musculus (Mouse).